Reading from the N-terminus, the 356-residue chain is Tyrosine recombinase XerS (356 aa).

The 106-residue stretch at 16 to 121 (IMPWYVLDYY…ALSSLYKYLT (106 aa)) folds into the Core-binding (CB) domain. One can recognise a Tyr recombinase domain in the interval 169–354 (AFLDYVDKEY…VNDEQKNALD (186 aa)). Active-site residues include arginine 210, lysine 234, histidine 306, arginine 309, and histidine 332. Tyrosine 341 functions as the O-(3'-phospho-DNA)-tyrosine intermediate in the catalytic mechanism.

This sequence belongs to the 'phage' integrase family. XerS subfamily.

Its subcellular location is the cytoplasm. FtsK is required for recombination. Its function is as follows. Site-specific tyrosine recombinase, which acts by catalyzing the cutting and rejoining of the recombining DNA molecules. Essential to convert dimers of the bacterial chromosome into monomers to permit their segregation at cell division. In Streptococcus pyogenes serotype M49 (strain NZ131), this protein is Tyrosine recombinase XerS.